The following is a 136-amino-acid chain: Large ribosomal subunit protein uL16 (136 aa).

This sequence belongs to the universal ribosomal protein uL16 family. In terms of assembly, part of the 50S ribosomal subunit.

Binds 23S rRNA and is also seen to make contacts with the A and possibly P site tRNAs. This chain is Large ribosomal subunit protein uL16, found in Erwinia tasmaniensis (strain DSM 17950 / CFBP 7177 / CIP 109463 / NCPPB 4357 / Et1/99).